We begin with the raw amino-acid sequence, 328 residues long: Phenylalanine--tRNA ligase alpha subunit (328 aa).

Mg(2+) is bound at residue Glu-245.

It belongs to the class-II aminoacyl-tRNA synthetase family. Phe-tRNA synthetase alpha subunit type 1 subfamily. In terms of assembly, tetramer of two alpha and two beta subunits. It depends on Mg(2+) as a cofactor.

It localises to the cytoplasm. It catalyses the reaction tRNA(Phe) + L-phenylalanine + ATP = L-phenylalanyl-tRNA(Phe) + AMP + diphosphate + H(+). This Helicobacter pylori (strain P12) protein is Phenylalanine--tRNA ligase alpha subunit.